Reading from the N-terminus, the 261-residue chain is 5'-nucleotidase SurE (261 aa).

A divalent metal cation-binding residues include D18, D19, S50, and N102.

The protein belongs to the SurE nucleotidase family. A divalent metal cation is required as a cofactor.

Its subcellular location is the cytoplasm. The catalysed reaction is a ribonucleoside 5'-phosphate + H2O = a ribonucleoside + phosphate. In terms of biological role, nucleotidase that shows phosphatase activity on nucleoside 5'-monophosphates. In Rhodospirillum rubrum (strain ATCC 11170 / ATH 1.1.1 / DSM 467 / LMG 4362 / NCIMB 8255 / S1), this protein is 5'-nucleotidase SurE.